A 222-amino-acid chain; its full sequence is Small ribosomal subunit protein uS7m (222 aa).

A mitochondrion-targeting transit peptide spans 1-14 (MSKKLANFAQKRWI).

This sequence belongs to the universal ribosomal protein uS7 family. Component of the mitochondrial ribosome small subunit (28S) which comprises a 12S rRNA and about 30 distinct proteins.

It is found in the mitochondrion. In Caenorhabditis briggsae, this protein is Small ribosomal subunit protein uS7m (mrps-7).